The chain runs to 204 residues: Bcl-2-like protein 10 (204 aa).

Positions 86 to 105 match the BH1 motif; the sequence is LSDSPGPTWGRVVTLVTFAG. Positions 118–133 are required for Ca(2+) binding; it reads WKKWGFQPRLKEQEGD. Residues lysine 119, lysine 120, and lysine 128 each participate in a glycyl lysine isopeptide (Lys-Gly) (interchain with G-Cter in ubiquitin) cross-link. The BH2 motif lies at 156–167; sequence WLQAQGGWDGFC. A helical transmembrane segment spans residues 183–200; the sequence is LVQAFLSCLLTTAFIYLW.

It belongs to the Bcl-2 family. In terms of assembly, interacts with BAX. Interacts with BCL2 and BCL2L1/BCLX. Interacts with APAF1. Interacts with ITPR1, ITPR2 and ITPR3; the interaction with ITPR1 is increased in the presence of AHCLY1. Interacts with AHCYL1. Interacts with HIP1R (via ENTH and I/LWEQ domains). Interacts with CASP9. Interacts with BCL2L11/BIM. Interacts with BIK. Interacts with UBQLN4. Interacts with NME2/NM23-H2. Interacts with PMAIP1/NOXA. Interacts with TPX2. Interacts with UBQLN1; in the cytoplasm. Interacts (via BH1 domain) with BECN1. It depends on Ca(2+) as a cofactor. Post-translationally, monoubiquitinated by UBQLN1; results in stabilization of BCL2L10 protein abundance and in relocalization from mitochondria to cytoplasm. In terms of tissue distribution, widely expressed in adult tissues. Preferentially expressed in lung, liver and kidney.

It is found in the mitochondrion. The protein localises to the nucleus membrane. Its subcellular location is the endoplasmic reticulum. It localises to the cytoplasm. The protein resides in the cytoskeleton. It is found in the spindle. Promotes cell survival by suppressing apoptosis induced by BAX but not BAK. Increases binding of AHCYL1/IRBIT to ITPR1. Reduces ITPR1-mediated calcium release from the endoplasmic reticulum cooperatively with AHCYL1/IRBIT under normal cellular conditions. Under apoptotic stress conditions, dissociates from ITPR1 and is displaced from mitochondria-associated endoplasmic reticulum membranes, leading to increased Ca(2+) transfer to mitochondria which promotes apoptosis. Required for the correct formation of the microtubule organizing center during oocyte cell division, potentially via regulation of protein abundance and localization of other microtubule organizing center components such as AURKA and TPX2. The protein is Bcl-2-like protein 10 of Homo sapiens (Human).